The primary structure comprises 132 residues: MTMTDPLGDMLTRIRNGASRRKSSVSTPASKLRARVLDVLQAEGYIRGYSVVDFGNGKSELSIELKYYEGSSVIREIGRVSKPGRRVYVSVKSIPQVANGLGIIILSTPKGVMADHQAREQNVGGEVLCSVF.

The protein belongs to the universal ribosomal protein uS8 family. Part of the 30S ribosomal subunit. Contacts proteins S5 and S12.

One of the primary rRNA binding proteins, it binds directly to 16S rRNA central domain where it helps coordinate assembly of the platform of the 30S subunit. The polypeptide is Small ribosomal subunit protein uS8 (Rhizobium rhizogenes (strain K84 / ATCC BAA-868) (Agrobacterium radiobacter)).